Here is a 494-residue protein sequence, read N- to C-terminus: uncharacterized protein (494 aa).

VOC domains lie at 18–174 (FIDC…FINR) and 229–408 (SLDH…FGIL). Fe cation contacts are provided by H232, H349, and E460.

This sequence belongs to the 4HPPD family. Requires Fe cation as cofactor.

Functionally, may have dioxygenase activity. This is an uncharacterized protein from Dictyostelium discoideum (Social amoeba).